The following is a 206-amino-acid chain: High-affinity nitrate transporter-activating protein 2.1 (206 aa).

The N-terminal stretch at M1–A27 is a signal peptide. The helical transmembrane segment at V180 to E200 threads the bilayer.

This sequence belongs to the NAR2 family. In terms of assembly, heterotetramer composed of two NRT2.1, NRT2.2 or NRT2.3 and two NAR2.1. Interacts with NRT2.1, NRT2.2 and isoform 1 of NRT2.3. In terms of tissue distribution, expressed in epidermal cells of primary and lateral roots, root-shoot junction zone, vascular tissues of adventitious root primordia, stems and coleoptiles of germinating seeds.

The protein localises to the cell membrane. In terms of biological role, acts as a dual component transporter with NTR2.1, NRT2.2 and NRT2.3. Required for high-affinity nitrate transport. Involved in the regulation of NRT2.1, NRT2.2 and NRT2.3 expression, and in both, HATS (high-affinity transport system) and LATS (low-affinity transport system) activities in plant roots. Imports nitrate with high affinity when expressed with NTR2.1, NTR2.2 or NTR2.3 in a heterologous system (Xenopus oocytes). The sequence is that of High-affinity nitrate transporter-activating protein 2.1 (NAR2.1) from Oryza sativa subsp. japonica (Rice).